Consider the following 117-residue polypeptide: uncharacterized protein (117 aa).

This is an uncharacterized protein from Acidianus convivator (ABV).